The primary structure comprises 659 residues: UDP-glucuronate:xylan alpha-glucuronosyltransferase 1 (659 aa).

The segment covering 1–14 (MANSPAAPAPTTTT) has biased composition (low complexity). A disordered region spans residues 1–20 (MANSPAAPAPTTTTGGDSRR). Residues 70–90 (FQIVKLLLFILLSATLFTIIY) form a helical; Signal-anchor for type II membrane protein membrane-spanning segment. Residues Asp-416 and Asp-418 each coordinate Mn(2+). Substrate-binding positions include 416 to 418 (DAD), 445 to 447 (NSG), 472 to 476 (NGGDQ), and 526 to 531 (HYLGMK). His-526 is a binding site for Mn(2+).

The protein belongs to the glycosyltransferase 8 family. Glycogenin subfamily. The cofactor is Mn(2+).

Its subcellular location is the golgi apparatus membrane. Functionally, glycosyltransferase required for the addition of both glucuronic acid and 4-O-methylglucuronic acid branches to xylan in stem cell walls. In association with GUX2, is responsible for almost all of the substitutions of the xylan backbone in stem glucuronoxylan. This Arabidopsis thaliana (Mouse-ear cress) protein is UDP-glucuronate:xylan alpha-glucuronosyltransferase 1 (GUX1).